The chain runs to 1239 residues: Inner tegument protein (1239 aa).

Disordered regions lie at residues 1–20 (MASA…DAQP), 669–704 (GESP…GGGP), 959–980 (RPPP…DTPP), and 1087–1239 (GRNA…AEDE). The tract at residues 615–1239 (NELPKTRSLA…RPPRPTAEDE (625 aa)) is interaction with large tegument protein. Low complexity predominate over residues 1112 to 1123 (DSSPFSFSSSDF). Over residues 1139–1148 (VPGGGGGGEG) the composition is skewed to gly residues. A compositionally biased stretch (basic and acidic residues) spans 1151-1170 (EEERERPSDIDTAARARKVE). Residues 1180–1189 (RTTPSPSRRA) show a composition bias toward low complexity. Basic residues predominate over residues 1219–1232 (VRPRTRRGATRRPP).

The protein belongs to the herpesviridae inner tegument protein family. As to quaternary structure, interacts (via C-terminus) with the large tegument protein/LTP (via N-terminus).

It localises to the virion tegument. It is found in the host cytoplasm. Its subcellular location is the host nucleus. The protein localises to the host Golgi apparatus. The protein resides in the host trans-Golgi network. Functionally, plays an essential role in cytoplasmic secondary envelopment during viral egress. Interacts with the capsid via the large tegument protein/LTP and participates in its transport to the host trans-Golgi network (TGN) where secondary envelopment occurs. Modulates tegumentation and capsid accumulation at the viral assembly complex. The sequence is that of Inner tegument protein from Homo sapiens (Human).